The sequence spans 468 residues: Phosphatidylinositol-binding clathrin assembly protein LAP (468 aa).

Residues 16-158 enclose the ENTH domain; the sequence is RHSLAGQGLA…LSYRAMAFDF (143 aa). The disordered stretch occupies residues 438-468; it reads NAGDGTAKYDGGAGSSPFDWGATDDDGGAAQ. A compositionally biased stretch (acidic residues) spans 459-468; it reads ATDDDGGAAQ.

The protein belongs to the PICALM/SNAP91 family. In terms of assembly, binds clathrin and phosphatidylinositol 4,5-bisphosphate. As to expression, in embryos, expression is seen in central and peripheral nervous systems (brain and ventral nerve cord) and Garland cells. Coexpressed with clathrin at presynaptic boutons of neuromuscular junctions.

It localises to the membrane. The protein resides in the clathrin-coated pit. The protein localises to the golgi apparatus. It is found in the cytoplasmic vesicle. Its subcellular location is the clathrin-coated vesicle. Assembly protein recruiting clathrin and adaptor protein complex 2 (AP2) to cell membranes at sites of coated-pit formation and clathrin-vesicle assembly. May be required to determine the amount of membrane to be recycled, possibly by regulating the size of the clathrin cage. Involved in AP2-dependent clathrin-mediated endocytosis at the neuromuscular junction. This chain is Phosphatidylinositol-binding clathrin assembly protein LAP (lap), found in Drosophila melanogaster (Fruit fly).